The chain runs to 510 residues: NAD(P)H-quinone oxidoreductase subunit 2 B, chloroplastic (510 aa).

Helical transmembrane passes span 24–44 (LLLF…GLIL), 59–79 (WFYF…LFRW), 99–119 (IFQF…VEYI), 124–144 (MAIT…MFLC), 149–169 (LITI…LSGY), 183–203 (YLLM…WLYG), 229–249 (ISIA…PAPF), 295–315 (WHLL…LLAI), 323–343 (MLAY…IVGD), 354–374 (YMLF…LFGL), 395–415 (ALSL…AGFF), and 418–438 (LYLF…IGLL).

Belongs to the complex I subunit 2 family. As to quaternary structure, NDH is composed of at least 16 different subunits, 5 of which are encoded in the nucleus.

The protein resides in the plastid. Its subcellular location is the chloroplast thylakoid membrane. The enzyme catalyses a plastoquinone + NADH + (n+1) H(+)(in) = a plastoquinol + NAD(+) + n H(+)(out). The catalysed reaction is a plastoquinone + NADPH + (n+1) H(+)(in) = a plastoquinol + NADP(+) + n H(+)(out). Its function is as follows. NDH shuttles electrons from NAD(P)H:plastoquinone, via FMN and iron-sulfur (Fe-S) centers, to quinones in the photosynthetic chain and possibly in a chloroplast respiratory chain. The immediate electron acceptor for the enzyme in this species is believed to be plastoquinone. Couples the redox reaction to proton translocation, and thus conserves the redox energy in a proton gradient. The sequence is that of NAD(P)H-quinone oxidoreductase subunit 2 B, chloroplastic from Agrostis stolonifera (Creeping bentgrass).